The following is a 514-amino-acid chain: Cytochrome P450 monooxygenase FUS8 (514 aa).

A helical transmembrane segment spans residues 28-48 (LTVTKAVGAFIVLFIIIPKVF). N225 and N443 each carry an N-linked (GlcNAc...) asparagine glycan. C460 contributes to the heme binding site.

It belongs to the cytochrome P450 family. Heme is required as a cofactor.

The protein resides in the membrane. The protein operates within mycotoxin biosynthesis. Cytochrome P450 monooxygenase; part of the gene cluster that mediates the biosynthesis of the mycotoxin fusarin C. Within the cluster, FUS1, FUS2, FUS8 and FUS9 are sufficient for fusarin production. The roles of the other FUS members are yet undetermined. The fusarin C synthetase FUS1 is responsible for the condensation of one acetyl-coenzyme A (CoA) unit with six malonyl-CoA units and the amide linkage of the arising heptaketide and homoserine, subsequently releasing the first intermediate, prefusarin, as an alcohol with an open ring structure. The cytochrome P450 monooxygenase FUS8 participates in multiple oxidation processes at carbon C-20 and is able to use the FUS1 product as substrate, resulting in formation of 20-hydroxy-prefusarin. This reaction seems to be essential before the 2-pyrrolidone ring closure can be catalyzed by FUS2, generating 20-hydroxy-fusarin. FUS8 is able to further oxidizes carbon C-20 after ring closure, resulting in the formation of carboxy-fusarin C. As the last step, FUS9 methylates the hydroxyl group at C-21 to generate fusarin C. Fusarin C can then rearrange to epi-fusarin C, the (z)-isomers, and fusarin A and fusarin D. This Gibberella moniliformis (strain M3125 / FGSC 7600) (Maize ear and stalk rot fungus) protein is Cytochrome P450 monooxygenase FUS8.